The primary structure comprises 347 residues: Tetraacyldisaccharide 4'-kinase (347 aa).

65–72 is a binding site for ATP; it reads FVGGTGKT.

The protein belongs to the LpxK family.

The catalysed reaction is a lipid A disaccharide + ATP = a lipid IVA + ADP + H(+). It participates in glycolipid biosynthesis; lipid IV(A) biosynthesis; lipid IV(A) from (3R)-3-hydroxytetradecanoyl-[acyl-carrier-protein] and UDP-N-acetyl-alpha-D-glucosamine: step 6/6. Functionally, transfers the gamma-phosphate of ATP to the 4'-position of a tetraacyldisaccharide 1-phosphate intermediate (termed DS-1-P) to form tetraacyldisaccharide 1,4'-bis-phosphate (lipid IVA). This chain is Tetraacyldisaccharide 4'-kinase, found in Janthinobacterium sp. (strain Marseille) (Minibacterium massiliensis).